The primary structure comprises 308 residues: tRNA dimethylallyltransferase (308 aa).

ATP is bound at residue 14-21; sequence GPTASGKT. Residue 16-21 participates in substrate binding; sequence TASGKT. 3 interaction with substrate tRNA regions span residues 39–42, 163–167, and 244–249; these read DSAL, QRLSR, and RCVGYR.

It belongs to the IPP transferase family. As to quaternary structure, monomer. Mg(2+) is required as a cofactor.

The catalysed reaction is adenosine(37) in tRNA + dimethylallyl diphosphate = N(6)-dimethylallyladenosine(37) in tRNA + diphosphate. Its function is as follows. Catalyzes the transfer of a dimethylallyl group onto the adenine at position 37 in tRNAs that read codons beginning with uridine, leading to the formation of N6-(dimethylallyl)adenosine (i(6)A). The chain is tRNA dimethylallyltransferase from Shewanella baltica (strain OS185).